The chain runs to 65 residues: Large ribosomal subunit protein bL33 (65 aa).

Positions alanine 20–threonine 42 are disordered.

Belongs to the bacterial ribosomal protein bL33 family.

In Prochlorococcus marinus (strain SARG / CCMP1375 / SS120), this protein is Large ribosomal subunit protein bL33.